Consider the following 449-residue polypeptide: Exodeoxyribonuclease 7 large subunit (449 aa).

Belongs to the XseA family. As to quaternary structure, heterooligomer composed of large and small subunits.

The protein resides in the cytoplasm. The catalysed reaction is Exonucleolytic cleavage in either 5'- to 3'- or 3'- to 5'-direction to yield nucleoside 5'-phosphates.. Functionally, bidirectionally degrades single-stranded DNA into large acid-insoluble oligonucleotides, which are then degraded further into small acid-soluble oligonucleotides. This chain is Exodeoxyribonuclease 7 large subunit, found in Lacticaseibacillus casei (strain BL23) (Lactobacillus casei).